The chain runs to 89 residues: Signal recognition particle 19 kDa protein (89 aa).

It belongs to the SRP19 family. As to quaternary structure, part of the signal recognition particle protein translocation system, which is composed of SRP and FtsY. Archaeal SRP consists of a 7S RNA molecule of 300 nucleotides and two protein subunits: SRP54 and SRP19.

The protein resides in the cytoplasm. In terms of biological role, involved in targeting and insertion of nascent membrane proteins into the cytoplasmic membrane. Binds directly to 7S RNA and mediates binding of the 54 kDa subunit of the SRP. The sequence is that of Signal recognition particle 19 kDa protein from Methanococcus maripaludis (strain DSM 14266 / JCM 13030 / NBRC 101832 / S2 / LL).